A 292-amino-acid chain; its full sequence is ATP synthase subunit a (292 aa).

7 helical membrane passes run 39-59, 73-93, 102-122, 128-148, 172-192, 196-216, and 231-251; these read QILG…FYKL, FLLL…DLLG, YFLM…LGGI, SLTF…VMGI, TFIP…SISL, GNIL…IFIF, and VFAG…AGVL.

It belongs to the ATPase A chain family. As to quaternary structure, F-type ATPases have 2 components, CF(1) - the catalytic core - and CF(0) - the membrane proton channel. CF(1) has five subunits: alpha(3), beta(3), gamma(1), delta(1), epsilon(1). CF(0) has three main subunits: a(1), b(2) and c(9-12). The alpha and beta chains form an alternating ring which encloses part of the gamma chain. CF(1) is attached to CF(0) by a central stalk formed by the gamma and epsilon chains, while a peripheral stalk is formed by the delta and b chains.

The protein resides in the cell membrane. In terms of biological role, key component of the proton channel; it plays a direct role in the translocation of protons across the membrane. The protein is ATP synthase subunit a of Mycoplasma genitalium (strain ATCC 33530 / DSM 19775 / NCTC 10195 / G37) (Mycoplasmoides genitalium).